We begin with the raw amino-acid sequence, 210 residues long: Small ribosomal subunit protein uS3 (210 aa).

One can recognise a KH type-2 domain in the interval 17-86 (IDEFLEKELR…NPQIDVQEIK (70 aa)).

This sequence belongs to the universal ribosomal protein uS3 family. Part of the 30S ribosomal subunit.

In terms of biological role, binds the lower part of the 30S subunit head. The sequence is that of Small ribosomal subunit protein uS3 from Pyrococcus horikoshii (strain ATCC 700860 / DSM 12428 / JCM 9974 / NBRC 100139 / OT-3).